The following is a 621-amino-acid chain: Zinc metalloproteinase-disintegrin-like TSV-DM (621 aa).

The signal sequence occupies residues 1-20 (MIQVLLVTICLAVFPYQGSS). The propeptide occupies 21 to 191 (IILESGNVND…EASQSNLTPE (171 aa)). Residue Q192 is modified to Pyrrolidone carboxylic acid. The Peptidase M12B domain occupies 200–396 (KYVKFFLVAD…NMPQCILKKP (197 aa)). N-linked (GlcNAc...) asparagine glycosylation is present at N219. 3 cysteine pairs are disulfide-bonded: C311–C391, C351–C375, and C353–C358. H336 is a Zn(2+) binding site. E337 is a catalytic residue. Positions 340 and 346 each coordinate Zn(2+). The Disintegrin domain maps to 404 to 489 (PPVCGNYFVE…AECTDRFQRN (86 aa)). Residues V406, N409, F411, E413, E416, and D419 each coordinate Ca(2+). 14 disulfide bridges follow: C407–C436, C418–C431, C420–C426, C430–C453, C444–C450, C449–C475, C462–C482, C469–C500, C493–C505, C512–C562, C527–C573, C540–C550, C557–C599, and C593–C605. A D/ECD-tripeptide motif is present at residues 468–470 (ECD). 5 residues coordinate Ca(2+): D470, M471, D473, D484, and R485. A glycan (N-linked (GlcNAc...) asparagine) is linked at N502.

Belongs to the venom metalloproteinase (M12B) family. P-III subfamily. P-IIIc sub-subfamily. In terms of assembly, homodimer; disulfide-linked. Zn(2+) serves as cofactor. In terms of processing, the N-terminus is blocked. In terms of tissue distribution, expressed by the venom gland.

It localises to the secreted. With respect to regulation, inhibited by EDTA and DTT, and partially inhibited by EGTA, but not inhibited by PMSF and NEM. Functionally, snake venom zinc metalloprotease that hydrolyzes the alpha-chain (FGA) and more slowly the beta-chain (FGB) of fibrinogen. Inhibits cell proliferation and induces cell morphologic changes transiently on human umbilical vein endothelial cells. The chain is Zinc metalloproteinase-disintegrin-like TSV-DM from Trimeresurus stejnegeri (Chinese green tree viper).